The primary structure comprises 191 residues: CASP-like protein 4C2 (191 aa).

Topologically, residues 1–29 (MEAADSATNNSKDTHFYGKSRAENRRRSD) are cytoplasmic. The helical transmembrane segment at 30-50 (AMLLLFRALTFSFSLAAVVVM) threads the bilayer. Topologically, residues 51-72 (GTNRYRINPQLKVSWYDFEPYR) are extracellular. A helical membrane pass occupies residues 73 to 93 (YVLAVNAIICIYSFVETWLAV). Residues 94-116 (YTYLQGSYLLPEIFQVWFDYGHD) are Cytoplasmic-facing. A helical membrane pass occupies residues 117–137 (QGFAYLLFSANSAGVAMAQLL). The Extracellular portion of the chain corresponds to 138–161 (QSGNTLIHGAYHCTEAGGYCTQAR). The chain crosses the membrane as a helical span at residues 162-182 (VSIALGFVAFLFLALSSLLTG). Residues 183 to 191 (LRVARWYLR) lie on the Cytoplasmic side of the membrane.

The protein belongs to the Casparian strip membrane proteins (CASP) family. As to quaternary structure, homodimer and heterodimers.

The protein resides in the cell membrane. In Physcomitrium patens (Spreading-leaved earth moss), this protein is CASP-like protein 4C2.